The primary structure comprises 220 residues: Dual specificity phosphatase 29 (220 aa).

Over residues 1–15 (MTSGEVKTSLKNAYS) the composition is skewed to polar residues. The disordered stretch occupies residues 1-29 (MTSGEVKTSLKNAYSSAKRLSPKMEEEGE). The 149-residue stretch at 54–202 (HVNEVWPKLY…LRELDKQLVQ (149 aa)) folds into the Tyrosine-protein phosphatase domain. Substrate is bound at residue 146 to 153 (HCVMGRSR). Cysteine 147 (phosphocysteine intermediate) is an active-site residue.

Belongs to the protein-tyrosine phosphatase family. Non-receptor class dual specificity subfamily. In terms of assembly, homodimer. Interacts with PRKAA2.

It is found in the cytoplasm. Its subcellular location is the nucleus. It catalyses the reaction O-phospho-L-tyrosyl-[protein] + H2O = L-tyrosyl-[protein] + phosphate. The catalysed reaction is O-phospho-L-seryl-[protein] + H2O = L-seryl-[protein] + phosphate. The enzyme catalyses O-phospho-L-threonyl-[protein] + H2O = L-threonyl-[protein] + phosphate. Its function is as follows. Dual specificity phosphatase able to dephosphorylate phosphotyrosine, phosphoserine and phosphothreonine residues within the same substrate, with a preference for phosphotyrosine as a substrate. Involved in the modulation of intracellular signaling cascades. In skeletal muscle regulates systemic glucose homeostasis by activating, AMPK, an energy sensor protein kinase. Affects MAP kinase signaling though modulation of the MAPK1/2 cascade in skeletal muscle promoting muscle cell differentiation, development and atrophy. In Homo sapiens (Human), this protein is Dual specificity phosphatase 29.